The following is a 542-amino-acid chain: CTP synthase (542 aa).

The segment at 1 to 265 is amidoligase domain; sequence MTRYIFVTGG…DDFVVERFGL (265 aa). CTP is bound at residue Ser13. Position 13 (Ser13) interacts with UTP. ATP contacts are provided by residues 14–19 and Asp71; that span reads SLGKGI. Residues Asp71 and Glu139 each coordinate Mg(2+). Residues 146–148, 186–191, and Lys222 each bind CTP; these read DIE and KTKPTQ. Residues 186-191 and Lys222 each bind UTP; that span reads KTKPTQ. Positions 290-541 constitute a Glutamine amidotransferase type-1 domain; it reads TIAMVGKYME…VKAALAQKNK (252 aa). Gly351 is a binding site for L-glutamine. Cys378 serves as the catalytic Nucleophile; for glutamine hydrolysis. Residues 379–382, Glu402, and Arg469 each bind L-glutamine; that span reads LGMQ. Active-site residues include His514 and Glu516.

The protein belongs to the CTP synthase family. Homotetramer.

The enzyme catalyses UTP + L-glutamine + ATP + H2O = CTP + L-glutamate + ADP + phosphate + 2 H(+). It carries out the reaction L-glutamine + H2O = L-glutamate + NH4(+). The catalysed reaction is UTP + NH4(+) + ATP = CTP + ADP + phosphate + 2 H(+). The protein operates within pyrimidine metabolism; CTP biosynthesis via de novo pathway; CTP from UDP: step 2/2. Its activity is regulated as follows. Allosterically activated by GTP, when glutamine is the substrate; GTP has no effect on the reaction when ammonia is the substrate. The allosteric effector GTP functions by stabilizing the protein conformation that binds the tetrahedral intermediate(s) formed during glutamine hydrolysis. Inhibited by the product CTP, via allosteric rather than competitive inhibition. Catalyzes the ATP-dependent amination of UTP to CTP with either L-glutamine or ammonia as the source of nitrogen. Regulates intracellular CTP levels through interactions with the four ribonucleotide triphosphates. This chain is CTP synthase, found in Pseudomonas entomophila (strain L48).